Reading from the N-terminus, the 242-residue chain is Placenta-expressed transcript 1 protein (242 aa).

A signal peptide spans 1–26 (MAILRSLLLPLGLLLCLWLLCSPASC). Topologically, residues 27 to 220 (TNSTTNCKPF…TTHKSSANRA (194 aa)) are extracellular. N-linked (GlcNAc...) asparagine glycosylation is found at N28, N81, and N106. The disordered stretch occupies residues 162–209 (VITTPTHKPTPAPPKPTTNPQKTTTNHSIPTTSLPKPTTSLYTSHPKL). Residues 169 to 178 (KPTPAPPKPT) are compositionally biased toward pro residues. The span at 179-205 (TNPQKTTTNHSIPTTSLPKPTTSLYTS) shows a compositional bias: low complexity. The chain crosses the membrane as a helical span at residues 221-241 (FLCPVREAIQILFIFLIGTLL). F242 is a topological domain (cytoplasmic).

N-glycosylated.

The protein localises to the membrane. It localises to the apical cell membrane. Its function is as follows. Modulates leading keratinocyte migration and cellular adhesion to matrix proteins during a wound-healing response and promotes wound repair. May play a role during trichilemmal differentiation of the hair follicle. This is Placenta-expressed transcript 1 protein (PLET1) from Bos taurus (Bovine).